Reading from the N-terminus, the 315-residue chain is Homoserine kinase (315 aa).

Pro97–Thr107 lines the ATP pocket.

The protein belongs to the GHMP kinase family. Homoserine kinase subfamily.

Its subcellular location is the cytoplasm. It catalyses the reaction L-homoserine + ATP = O-phospho-L-homoserine + ADP + H(+). Its pathway is amino-acid biosynthesis; L-threonine biosynthesis; L-threonine from L-aspartate: step 4/5. In terms of biological role, catalyzes the ATP-dependent phosphorylation of L-homoserine to L-homoserine phosphate. The protein is Homoserine kinase of Prochlorococcus marinus (strain MIT 9301).